We begin with the raw amino-acid sequence, 388 residues long: Pepsin A-5 (388 aa).

Positions 1–15 are cleaved as a signal peptide; the sequence is MKWLLLLGLVALSEC. Positions 16-62 are cleaved as a propeptide — activation peptide; it reads IMYKVPLIRKKSLRRTLSERGLLKDFLKKHNLNPARKYFPQWEAPTL. Residues 76 to 385 enclose the Peptidase A1 domain; that stretch reads YFGTIGIGTP…DRANNQVGLA (310 aa). Residue Asp-94 is part of the active site. Cys-107 and Cys-112 are oxidised to a cystine. The residue at position 130 (Ser-130) is a Phosphoserine. Cys-268 and Cys-272 are disulfide-bonded. Asp-277 is an active-site residue. The cysteines at positions 311 and 344 are disulfide-linked.

It belongs to the peptidase A1 family.

It localises to the secreted. It catalyses the reaction Preferential cleavage: hydrophobic, preferably aromatic, residues in P1 and P1' positions. Cleaves 1-Phe-|-Val-2, 4-Gln-|-His-5, 13-Glu-|-Ala-14, 14-Ala-|-Leu-15, 15-Leu-|-Tyr-16, 16-Tyr-|-Leu-17, 23-Gly-|-Phe-24, 24-Phe-|-Phe-25 and 25-Phe-|-Tyr-26 bonds in the B chain of insulin.. In terms of biological role, shows particularly broad specificity; although bonds involving phenylalanine and leucine are preferred, many others are also cleaved to some extent. The sequence is that of Pepsin A-5 (PGA5) from Homo sapiens (Human).